We begin with the raw amino-acid sequence, 51 residues long: Cyclic phosphodiesterase (51 aa).

Residue His-11 is the Proton donor/acceptor of the active site. A substrate-binding site is contributed by Thr-13. The Proton donor/acceptor role is filled by His-38. Residues Ser-40 and Tyr-43 each coordinate substrate.

The protein belongs to the 2H phosphoesterase superfamily. CPD1 family.

In terms of biological role, hydrolyzes ADP-ribose 1'',2''-cyclic phosphate (Appr&gt;1) that is produced during tRNA splicing into ADP-ribose 1''-phosphate (Appr-1''p). The sequence is that of Cyclic phosphodiesterase from Triticum aestivum (Wheat).